We begin with the raw amino-acid sequence, 401 residues long: Steroid C26-monooxygenase (401 aa).

Position 343 (cysteine 343) interacts with heme.

This sequence belongs to the cytochrome P450 family. The cofactor is heme.

It catalyses the reaction cholest-4-en-3-one + 6 reduced [2Fe-2S]-[ferredoxin] + 3 O2 + 5 H(+) = (25R)-3-oxocholest-4-en-26-oate + 6 oxidized [2Fe-2S]-[ferredoxin] + 4 H2O. It functions in the pathway steroid metabolism; cholesterol degradation. Its function is as follows. Involved in the utilization of cholesterol as the sole carbon and energy source by degrading the side chain. Primarily catalyzes the sequential oxidation of the terminal methyl of cholest-4-en-3-one into (25R)-26-hydroxycholest-4-en-3-one (alcohol), (25R)-26-oxocholest-4-en-3-one (aldehyde), to finally yield the carboxylic acid (25R)-3-oxocholest-4-en-26-oate. Also able to sequentially oxidize cholesterol itself, not only cholest-4-en-3-one. This chain is Steroid C26-monooxygenase, found in Mycolicibacterium smegmatis (strain ATCC 700084 / mc(2)155) (Mycobacterium smegmatis).